The sequence spans 995 residues: Integrator complex subunit 8 (995 aa).

Thr18 bears the Phosphothreonine mark. Residues 24 to 29 (WFEFLL) carry the WFEF motif motif. 4 TPR repeats span residues 250-288 (CQVC…IAEI), 320-356 (SQQL…SLPV), 570-603 (VYIL…VTEF), and 833-866 (HSWL…CSDF).

The protein belongs to the Integrator subunit 8 family. As to quaternary structure, component of the Integrator complex, composed of core subunits INTS1, INTS2, INTS3, INTS4, INTS5, INTS6, INTS7, INTS8, INTS9/RC74, INTS10, INTS11/CPSF3L, INTS12, INTS13, INTS14 and INTS15. The core complex associates with protein phosphatase 2A subunits PPP2CA and PPP2R1A, to form the Integrator-PP2A (INTAC) complex.

It is found in the nucleus. The protein localises to the chromosome. Functionally, component of the integrator complex, a multiprotein complex that terminates RNA polymerase II (Pol II) transcription in the promoter-proximal region of genes. The integrator complex provides a quality checkpoint during transcription elongation by driving premature transcription termination of transcripts that are unfavorably configured for transcriptional elongation: the complex terminates transcription by (1) catalyzing dephosphorylation of the C-terminal domain (CTD) of Pol II subunit POLR2A/RPB1 and SUPT5H/SPT5, (2) degrading the exiting nascent RNA transcript via endonuclease activity and (3) promoting the release of Pol II from bound DNA. The integrator complex is also involved in terminating the synthesis of non-coding Pol II transcripts, such as enhancer RNAs (eRNAs), small nuclear RNAs (snRNAs), telomerase RNAs and long non-coding RNAs (lncRNAs). Within the integrator complex, INTS8 is required for the recruitment of protein phosphatase 2A (PP2A) to transcription pause-release checkpoint. This Homo sapiens (Human) protein is Integrator complex subunit 8.